Consider the following 199-residue polypeptide: Transgelin-3 (199 aa).

The 113-residue stretch at 24–136 folds into the Calponin-homology (CH) domain; sequence ADLENKLVDW…RTLMALGSVA (113 aa). The residue at position 163 (Ser-163) is a Phosphoserine. A Calponin-like repeat occupies 174–199; sequence IGLQMGSNKGASQAGMTGYGMPRQIM. Residues 178–188 show a composition bias toward polar residues; the sequence is MGSNKGASQAG. The disordered stretch occupies residues 178-199; the sequence is MGSNKGASQAGMTGYGMPRQIM.

Belongs to the calponin family. In terms of tissue distribution, abundant and ubiquitous expression in neurons.

This is Transgelin-3 (Tagln3) from Rattus norvegicus (Rat).